A 170-amino-acid chain; its full sequence is Peptide deformylase (170 aa).

Fe cation contacts are provided by Cys-91 and His-133. Glu-134 is an active-site residue. His-137 lines the Fe cation pocket.

Belongs to the polypeptide deformylase family. Fe(2+) is required as a cofactor.

The catalysed reaction is N-terminal N-formyl-L-methionyl-[peptide] + H2O = N-terminal L-methionyl-[peptide] + formate. Removes the formyl group from the N-terminal Met of newly synthesized proteins. Requires at least a dipeptide for an efficient rate of reaction. N-terminal L-methionine is a prerequisite for activity but the enzyme has broad specificity at other positions. This Pasteurella multocida (strain Pm70) protein is Peptide deformylase.